We begin with the raw amino-acid sequence, 552 residues long: Dihydroxy-acid dehydratase (552 aa).

Aspartate 78 lines the Mg(2+) pocket. Cysteine 119 lines the [2Fe-2S] cluster pocket. The Mg(2+) site is built by aspartate 120 and lysine 121. Position 121 is an N6-carboxylysine (lysine 121). A [2Fe-2S] cluster-binding site is contributed by cysteine 191. Glutamate 442 contacts Mg(2+). Catalysis depends on serine 468, which acts as the Proton acceptor.

It belongs to the IlvD/Edd family. As to quaternary structure, homodimer. [2Fe-2S] cluster serves as cofactor. The cofactor is Mg(2+).

It catalyses the reaction (2R)-2,3-dihydroxy-3-methylbutanoate = 3-methyl-2-oxobutanoate + H2O. The enzyme catalyses (2R,3R)-2,3-dihydroxy-3-methylpentanoate = (S)-3-methyl-2-oxopentanoate + H2O. The protein operates within amino-acid biosynthesis; L-isoleucine biosynthesis; L-isoleucine from 2-oxobutanoate: step 3/4. Its pathway is amino-acid biosynthesis; L-valine biosynthesis; L-valine from pyruvate: step 3/4. Its function is as follows. Functions in the biosynthesis of branched-chain amino acids. Catalyzes the dehydration of (2R,3R)-2,3-dihydroxy-3-methylpentanoate (2,3-dihydroxy-3-methylvalerate) into 2-oxo-3-methylpentanoate (2-oxo-3-methylvalerate) and of (2R)-2,3-dihydroxy-3-methylbutanoate (2,3-dihydroxyisovalerate) into 2-oxo-3-methylbutanoate (2-oxoisovalerate), the penultimate precursor to L-isoleucine and L-valine, respectively. The sequence is that of Dihydroxy-acid dehydratase from Clostridium botulinum (strain Eklund 17B / Type B).